The following is a 470-amino-acid chain: Nuclear receptor subfamily 0 group B member 1 (470 aa).

3 tandem repeats follow at residues 1–67 (MAGE…YRCC), 68–133 (FCGK…YRCC), and 134–200 (FCGE…YRCC). Positions 1-253 (MAGENHQWQG…RPVALKNPQV (253 aa)) are 4 X 67 AA tandem repeats. 3 consecutive short sequence motifs (LXXLL motif) follow at residues 13–17 (LYNML), 80–84 (LYSML), and 146–150 (LYSLL). Residues 201–253 (FCGEDHPQQGSTLYCMPTSTNQAQAAPEERPRAPWWDASSGALRPVALKNPQV) form a 4; truncated repeat. Positions 215 to 469 (CMPTSTNQAQ…DMMLEMLCTK (255 aa)) constitute an NR LBD domain. The short motif at 461–466 (MMLEML) is the AF-2 motif element.

This sequence belongs to the nuclear hormone receptor family. NR0 subfamily. Homodimer. Interacts with NR5A1, NR5A2, NR0B2 and with COPS2. Interacts with ESRRB; represses ESRRB activity at the GATA6 promoter.

The protein localises to the nucleus. Its subcellular location is the cytoplasm. Its function is as follows. Nuclear receptor that lacks a DNA-binding domain and acts as a corepressor that inhibits the transcriptional activity of other nuclear receptors through heterodimeric interactions. Component of a cascade required for the development of the hypothalamic-pituitary-adrenal-gonadal axis. May also have a role in the development of the embryo and in the maintenance of embryonic stem cell pluripotency. In Pongo pygmaeus (Bornean orangutan), this protein is Nuclear receptor subfamily 0 group B member 1 (NR0B1).